A 490-amino-acid chain; its full sequence is Cytochrome P450 2C38 (490 aa).

The signal sequence occupies residues 1-20 (MDLVTFLVLTLSSLILLSLW). Position 435 (Cys-435) interacts with heme.

The protein belongs to the cytochrome P450 family. It depends on heme as a cofactor. In terms of tissue distribution, liver, brain, kidney, and intestine, with trace amounts in lung and heart.

It is found in the endoplasmic reticulum membrane. The protein localises to the microsome membrane. It catalyses the reaction an organic molecule + reduced [NADPH--hemoprotein reductase] + O2 = an alcohol + oxidized [NADPH--hemoprotein reductase] + H2O + H(+). It carries out the reaction (5Z,8Z,11Z,14Z)-eicosatetraenoate + reduced [NADPH--hemoprotein reductase] + O2 = 11,12-epoxy-(5Z,8Z,14Z)-eicosatrienoate + oxidized [NADPH--hemoprotein reductase] + H2O + H(+). It functions in the pathway lipid metabolism; arachidonate metabolism. Its function is as follows. A cytochrome P450 monooxygenase that primarily catalyzes the epoxidation of 11,12 double bond of (5Z,8Z,11Z,14Z)-eicosatetraenoic acid (arachidonate) forming 11,12-epoxyeicosatrienoic acid (11,12-EET) regioisomer. Mechanistically, uses molecular oxygen inserting one oxygen atom into a substrate, and reducing the second into a water molecule, with two electrons provided by NADPH via cytochrome P450 reductase (CPR; NADPH--hemoprotein reductase). In Mus musculus (Mouse), this protein is Cytochrome P450 2C38.